A 509-amino-acid chain; its full sequence is ATP synthase subunit alpha (509 aa).

169–176 (GDRQTGKT) is an ATP binding site.

Belongs to the ATPase alpha/beta chains family. In terms of assembly, F-type ATPases have 2 components, CF(1) - the catalytic core - and CF(0) - the membrane proton channel. CF(1) has five subunits: alpha(3), beta(3), gamma(1), delta(1), epsilon(1). CF(0) has three main subunits: a(1), b(2) and c(9-12). The alpha and beta chains form an alternating ring which encloses part of the gamma chain. CF(1) is attached to CF(0) by a central stalk formed by the gamma and epsilon chains, while a peripheral stalk is formed by the delta and b chains.

It localises to the cell inner membrane. It catalyses the reaction ATP + H2O + 4 H(+)(in) = ADP + phosphate + 5 H(+)(out). Produces ATP from ADP in the presence of a proton gradient across the membrane. The alpha chain is a regulatory subunit. This is ATP synthase subunit alpha from Rhizobium leguminosarum bv. trifolii (strain WSM2304).